Here is a 2259-residue protein sequence, read N- to C-terminus: Putative Polycomb group protein ASXL3 (2259 aa).

One can recognise an HTH HARE-type domain in the interval Arg10–Glu83. The segment at Val181–Lys230 is disordered. Positions Lys202 to His215 are enriched in basic and acidic residues. Polar residues predominate over residues Lys218–Gln227. In terms of domain architecture, DEUBAD spans Pro253–Gly362. Disordered stretches follow at residues Ser364–Ala399, Cys607–Ala643, Glu703–Pro810, Ser857–Ile1012, Ser1025–Ala1049, Arg1126–Glu1150, Leu1433–Val1462, Asp1614–Ala1643, Asp1687–Pro1719, and Asn1993–Arg2075. 3 stretches are compositionally biased toward polar residues: residues Cys607–Ser617, Gly630–Ala643, and Glu703–Ser717. Positions Leu722–Pro741 are enriched in low complexity. Polar residues-rich tracts occupy residues Lys770–Pro781 and Gln926–Ser945. Basic and acidic residues-rich tracts occupy residues Asp949–Ser985 and Pro995–Arg1006. Low complexity predominate over residues Arg1034–Ser1043. Polar residues predominate over residues Asn1437 to Thr1448. Over residues Glu1699 to Pro1719 the composition is skewed to polar residues. A compositionally biased stretch (pro residues) spans Pro2023–Pro2055. The segment at Glu2221 to Val2258 adopts a PHD-type; atypical zinc-finger fold.

It belongs to the Asx family. As to quaternary structure, core component of the polycomb repressive deubiquitinase (PR-DUB) complex, at least composed of BAP1, one of ASXL1, ASXL2 or (probably) ASXL3, and one of MBD5 or MBD6. Distinct combinations of ASXL and MBD proteins may preferentially bind specific histone modification marks. The PR-DUB core associates with a number of accessory proteins, including FOXK1, FOXK2, KDM1B, HCFC1 and OGT; KDM1B specifically associates with ASXL2 PR-DUB complexes. Interacts (via PHD domain) with MBD5 and MBD6 (via MBD domain); the interaction is probably direct and mediates association of MBD proteins with the PR-DUB core.

It localises to the nucleus. Putative Polycomb group (PcG) protein. PcG proteins act by forming multiprotein complexes, which are required to maintain the transcriptionally repressive state of homeotic genes throughout development. PcG proteins are not required to initiate repression, but to maintain it during later stages of development. They probably act via methylation of histones, rendering chromatin heritably changed in its expressibility. Non-catalytic component of the PR-DUB complex, a complex that specifically mediates deubiquitination of histone H2A monoubiquitinated at 'Lys-119' (H2AK119ub1). The PR-DUB complex is an epigenetic regulator of gene expression and acts as a transcriptional coactivator, affecting genes involved in development, cell communication, signaling, cell proliferation and cell viability. ASXL1, ASXL2 and ASXL3 function redundantly in the PR-DUB complex and are essential for chromatin recruitment and transcriptional activation of associated genes. In Mus musculus (Mouse), this protein is Putative Polycomb group protein ASXL3 (Asxl3).